The chain runs to 211 residues: Large ribosomal subunit protein uL3 (211 aa).

Q150 bears the N5-methylglutamine mark.

Belongs to the universal ribosomal protein uL3 family. As to quaternary structure, part of the 50S ribosomal subunit. Forms a cluster with proteins L14 and L19. Methylated by PrmB.

Its function is as follows. One of the primary rRNA binding proteins, it binds directly near the 3'-end of the 23S rRNA, where it nucleates assembly of the 50S subunit. This chain is Large ribosomal subunit protein uL3, found in Pseudomonas aeruginosa (strain LESB58).